A 380-amino-acid polypeptide reads, in one-letter code: Tryptophan 2,3-dioxygenase (380 aa).

Substrate contacts are provided by residues 57–61 (FIITH) and arginine 128. Heme is bound at residue histidine 313. Threonine 328 contacts substrate.

It belongs to the tryptophan 2,3-dioxygenase family. Homotetramer. Dimer of dimers. Heme is required as a cofactor.

It catalyses the reaction L-tryptophan + O2 = N-formyl-L-kynurenine. The protein operates within amino-acid degradation; L-tryptophan degradation via kynurenine pathway; L-kynurenine from L-tryptophan: step 1/2. It functions in the pathway pigment biosynthesis; ommochrome biosynthesis. Its function is as follows. Heme-dependent dioxygenase that catalyzes the oxidative cleavage of the L-tryptophan (L-Trp) pyrrole ring and converts L-tryptophan to N-formyl-L-kynurenine. Catalyzes the oxidative cleavage of the indole moiety. The chain is Tryptophan 2,3-dioxygenase from Drosophila virilis (Fruit fly).